The chain runs to 255 residues: Poxin (255 aa).

The protein belongs to the poxin family. Highly divergent.

It carries out the reaction 2',3'-cGAMP + H2O = Gp(2'-5')Ap(3') + H(+). In terms of biological role, nuclease that cleaves 2',3'-cGAMP. This is Poxin from Bombyx mori (Silk moth).